A 90-amino-acid chain; its full sequence is Electron transfer flavoprotein regulatory factor 1 (90 aa).

It belongs to the complex I LYR family. As to quaternary structure, homotetramer. Interacts with NDUFAB1. Interacts with ETFA. Interacts with ETFB.

The protein localises to the mitochondrion. Its function is as follows. Acts as a regulator of the electron transfer flavoprotein by promoting the removal of flavin from the ETF holoenzyme (composed of ETFA and ETFB). This is Electron transfer flavoprotein regulatory factor 1 from Homo sapiens (Human).